Here is a 274-residue protein sequence, read N- to C-terminus: Thymidylate synthase (274 aa).

DUMP is bound at residue Arg21. Position 51 (His51) interacts with (6R)-5,10-methylene-5,6,7,8-tetrahydrofolate. A dUMP-binding site is contributed by Arg123–Arg124. Cys156 serves as the catalytic Nucleophile. Residues Arg176–Asp179, Asn187, and His217–Tyr219 contribute to the dUMP site. Asp179 contacts (6R)-5,10-methylene-5,6,7,8-tetrahydrofolate. Ala273 serves as a coordination point for (6R)-5,10-methylene-5,6,7,8-tetrahydrofolate.

Belongs to the thymidylate synthase family. Bacterial-type ThyA subfamily. As to quaternary structure, homodimer.

Its subcellular location is the cytoplasm. It catalyses the reaction dUMP + (6R)-5,10-methylene-5,6,7,8-tetrahydrofolate = 7,8-dihydrofolate + dTMP. It participates in pyrimidine metabolism; dTTP biosynthesis. Catalyzes the reductive methylation of 2'-deoxyuridine-5'-monophosphate (dUMP) to 2'-deoxythymidine-5'-monophosphate (dTMP) while utilizing 5,10-methylenetetrahydrofolate (mTHF) as the methyl donor and reductant in the reaction, yielding dihydrofolate (DHF) as a by-product. This enzymatic reaction provides an intracellular de novo source of dTMP, an essential precursor for DNA biosynthesis. The chain is Thymidylate synthase from Christiangramia forsetii (strain DSM 17595 / CGMCC 1.15422 / KT0803) (Gramella forsetii).